Consider the following 89-residue polypeptide: Dynein light chain 1, cytoplasmic (89 aa).

It belongs to the dynein light chain family. As to quaternary structure, interacts with mett-10; the interaction is direct, and is required for the nuclear localization of mett-10. Component of a dynein-regulating complex composed of at least bicd-1, dlc-1 and egal-1. Interacts with egal-1 and unc-83. Interacts with fbf-2. As to expression, broadly expressed in tissues including the intestine, body wall muscles, germs cells, oocytes, the rectal valve and cells in the head.

The protein localises to the cytoplasm. It is found in the cytoskeleton. The protein resides in the nucleus envelope. It localises to the cytoplasmic granule. Acts as a non-catalytic accessory component of a dynein complex. Part of a complex with bicd-1 and egal-1, which is recruited to the nuclear envelope by unc-83, where in turn, it recruits dynein to the nuclear surface and regulates nuclear migrations in hypodermal precursor cells. Probably within a dynein motor complex, plays a role in the cell fate specification of the germline and oogenesis. In particular, it inhibits germ cell proliferation. Regulates the function and localization of the RNA-binding protein fbf-2 in the germline. Plays a role in mitotic and meiotic processes. Involved in the pairing of homologous chromosomes. Independently of its dynein-mediated functions, plays a role in germ cell apoptosis. The chain is Dynein light chain 1, cytoplasmic from Caenorhabditis elegans.